A 262-amino-acid polypeptide reads, in one-letter code: tRNA pseudouridine synthase A (262 aa).

Catalysis depends on aspartate 51, which acts as the Nucleophile. Tyrosine 109 contributes to the substrate binding site.

The protein belongs to the tRNA pseudouridine synthase TruA family. In terms of assembly, homodimer.

It carries out the reaction uridine(38/39/40) in tRNA = pseudouridine(38/39/40) in tRNA. Its function is as follows. Formation of pseudouridine at positions 38, 39 and 40 in the anticodon stem and loop of transfer RNAs. The sequence is that of tRNA pseudouridine synthase A from Legionella pneumophila (strain Lens).